The chain runs to 291 residues: Protease HtpX (291 aa).

A run of 2 helical transmembrane segments spans residues Ile4–Ile24 and Leu36–Leu56. Residue His143 participates in Zn(2+) binding. The active site involves Glu144. His147 provides a ligand contact to Zn(2+). A run of 2 helical transmembrane segments spans residues Gly151–Ser171 and Phe199–Trp219. Glu225 contributes to the Zn(2+) binding site.

The protein belongs to the peptidase M48B family. Zn(2+) is required as a cofactor.

Its subcellular location is the cell inner membrane. The protein is Protease HtpX of Aliivibrio salmonicida (strain LFI1238) (Vibrio salmonicida (strain LFI1238)).